A 91-amino-acid chain; its full sequence is MKVFAAALAVILATATFCTPASASPYASDTTPCCFAYISRPLPRAHIQEYFYTSSKCSIPAVVFVTRKKRQVCANPEKKWVREYINTLEMS.

A signal peptide spans 1–23 (MKVFAAALAVILATATFCTPASA). Disulfide bonds link Cys33-Cys57 and Cys34-Cys73.

It belongs to the intercrine beta (chemokine CC) family.

The protein resides in the secreted. In terms of biological role, chemoattractant for blood monocytes, memory T-helper cells and eosinophils. Causes the release of histamine from basophils and activates eosinophils. May activate several chemokine receptors including CCR1, CCR3, CCR4 and CCR5. May also be an agonist of the G protein-coupled receptor GPR75. Together with GPR75, may play a role in neuron survival through activation of a downstream signaling pathway involving the PI3, Akt and MAP kinases. By activating GPR75 may also play a role in insulin secretion by islet cells. The protein is C-C motif chemokine 5 (CCL5) of Equus caballus (Horse).